The primary structure comprises 361 residues: Probable dual-specificity RNA methyltransferase RlmN (361 aa).

The active-site Proton acceptor is the Glu102. The Radical SAM core domain maps to 108–344; the sequence is SGDRLTVCVS…VRWSKGLGAD (237 aa). A disulfide bridge connects residues Cys115 and Cys347. Residues Cys122, Cys126, and Cys129 each coordinate [4Fe-4S] cluster. S-adenosyl-L-methionine is bound by residues 169–170, Ser199, 228–230, and Asn304; these read GE and SLH. The active-site S-methylcysteine intermediate is the Cys347.

The protein belongs to the radical SAM superfamily. RlmN family. [4Fe-4S] cluster is required as a cofactor.

The protein localises to the cytoplasm. It catalyses the reaction adenosine(2503) in 23S rRNA + 2 reduced [2Fe-2S]-[ferredoxin] + 2 S-adenosyl-L-methionine = 2-methyladenosine(2503) in 23S rRNA + 5'-deoxyadenosine + L-methionine + 2 oxidized [2Fe-2S]-[ferredoxin] + S-adenosyl-L-homocysteine. It carries out the reaction adenosine(37) in tRNA + 2 reduced [2Fe-2S]-[ferredoxin] + 2 S-adenosyl-L-methionine = 2-methyladenosine(37) in tRNA + 5'-deoxyadenosine + L-methionine + 2 oxidized [2Fe-2S]-[ferredoxin] + S-adenosyl-L-homocysteine. Its function is as follows. Specifically methylates position 2 of adenine 2503 in 23S rRNA and position 2 of adenine 37 in tRNAs. This is Probable dual-specificity RNA methyltransferase RlmN from Synechococcus elongatus (strain ATCC 33912 / PCC 7942 / FACHB-805) (Anacystis nidulans R2).